The primary structure comprises 130 residues: Small ribosomal subunit protein uS9 (130 aa).

The disordered stretch occupies residues 102–130 (GFLTRDPRMKERKKYGLKKARRAPQFSKR). Basic residues predominate over residues 111-130 (KERKKYGLKKARRAPQFSKR).

Belongs to the universal ribosomal protein uS9 family.

This chain is Small ribosomal subunit protein uS9, found in Clostridium novyi (strain NT).